A 367-amino-acid chain; its full sequence is Zorya protein ZorE (367 aa).

Functionally, component of antiviral defense system Zorya type II, composed of ZorA, ZorB and ZorE. Expression of Zorya type II in E.coli (strain MG1655) confers resistance to phages SECphi7 and T7. While most T7 infected Zorya-containing cells undergo abortive infection, a minority produce viable phage progeny. These eventually accumulate to a high multiplicity of infection, leading to culture collapse by 170 minutes after initial infection. ZorA and ZorB probably assemble in the cell inner membrane and exert their effect there. This may be a nuclease. In Escherichia coli (strain ATCC 8739 / DSM 1576 / NBRC 3972 / NCIMB 8545 / WDCM 00012 / Crooks), this protein is Zorya protein ZorE.